The chain runs to 366 residues: Chorismate synthase (366 aa).

NADP(+) contacts are provided by R48 and R54. FMN-binding positions include 125-127 (RSS), 238-239 (NA), G278, 293-297 (KPTSS), and R319.

Belongs to the chorismate synthase family. In terms of assembly, homotetramer. FMNH2 serves as cofactor.

It catalyses the reaction 5-O-(1-carboxyvinyl)-3-phosphoshikimate = chorismate + phosphate. It participates in metabolic intermediate biosynthesis; chorismate biosynthesis; chorismate from D-erythrose 4-phosphate and phosphoenolpyruvate: step 7/7. Its function is as follows. Catalyzes the anti-1,4-elimination of the C-3 phosphate and the C-6 proR hydrogen from 5-enolpyruvylshikimate-3-phosphate (EPSP) to yield chorismate, which is the branch point compound that serves as the starting substrate for the three terminal pathways of aromatic amino acid biosynthesis. This reaction introduces a second double bond into the aromatic ring system. The protein is Chorismate synthase of Burkholderia orbicola (strain MC0-3).